Consider the following 551-residue polypeptide: Urocanate hydratase (551 aa).

NAD(+) contacts are provided by residues 48–49, Gln-126, 172–174, Glu-192, Arg-197, 238–239, 259–263, 269–270, and Tyr-318; these read GG, GMG, NA, QTSAH, and YI. The active site involves Cys-406. Position 488 (Gly-488) interacts with NAD(+).

It belongs to the urocanase family. NAD(+) is required as a cofactor.

The protein localises to the cytoplasm. The enzyme catalyses 4-imidazolone-5-propanoate = trans-urocanate + H2O. It functions in the pathway amino-acid degradation; L-histidine degradation into L-glutamate; N-formimidoyl-L-glutamate from L-histidine: step 2/3. Catalyzes the conversion of urocanate to 4-imidazolone-5-propionate. The protein is Urocanate hydratase of Geobacillus kaustophilus (strain HTA426).